The chain runs to 229 residues: Glycerol-3-phosphate acyltransferase (229 aa).

Helical transmembrane passes span 2–22, 56–76, 93–113, 129–149, 151–171, and 178–198; these read WSLT…GALW, LATV…ASVI, FVVL…YPIF, LFAL…AVLL, SRYV…IVAL, and ADLD…IVVA.

It belongs to the PlsY family. Probably interacts with PlsX.

It localises to the cell inner membrane. The catalysed reaction is an acyl phosphate + sn-glycerol 3-phosphate = a 1-acyl-sn-glycero-3-phosphate + phosphate. It participates in lipid metabolism; phospholipid metabolism. Functionally, catalyzes the transfer of an acyl group from acyl-phosphate (acyl-PO(4)) to glycerol-3-phosphate (G3P) to form lysophosphatidic acid (LPA). This enzyme utilizes acyl-phosphate as fatty acyl donor, but not acyl-CoA or acyl-ACP. This is Glycerol-3-phosphate acyltransferase from Salinibacter ruber (strain DSM 13855 / M31).